The following is a 238-amino-acid chain: Trypsin-3 (238 aa).

The signal sequence occupies residues 1–7 (FAVAFAA). Residues 8-15 (PIDDEDDK) constitute a propeptide, activation peptide. The Peptidase S1 domain maps to 16 to 236 (IVGGYECRKN…YRSWISSTMS (221 aa)). 6 disulfides stabilise this stretch: cysteine 22/cysteine 152, cysteine 40/cysteine 56, cysteine 124/cysteine 225, cysteine 131/cysteine 198, cysteine 163/cysteine 177, and cysteine 188/cysteine 212. Histidine 55 functions as the Charge relay system in the catalytic mechanism. Ca(2+) is bound by residues glutamate 67, asparagine 69, valine 72, and glutamate 77. Residue aspartate 99 is the Charge relay system of the active site. Serine 192 (charge relay system) is an active-site residue.

The protein belongs to the peptidase S1 family. The cofactor is Ca(2+).

It is found in the secreted. The protein localises to the extracellular space. The enzyme catalyses Preferential cleavage: Arg-|-Xaa, Lys-|-Xaa.. This is Trypsin-3 from Salmo salar (Atlantic salmon).